We begin with the raw amino-acid sequence, 119 residues long: Small ribosomal subunit protein bS16 (119 aa).

Belongs to the bacterial ribosomal protein bS16 family.

This chain is Small ribosomal subunit protein bS16, found in Amoebophilus asiaticus (strain 5a2).